The primary structure comprises 248 residues: Type II methyltransferase M.AquIA (248 aa).

The region spanning 3-248 (KKLISLFSGA…IKDRIKNHGY (246 aa)) is the SAM-dependent MTase C5-type domain. C82 is an active-site residue.

The protein belongs to the class I-like SAM-binding methyltransferase superfamily. C5-methyltransferase family. As to quaternary structure, heterodimer of an alpha and a beta subunit.

It carries out the reaction a 2'-deoxycytidine in DNA + S-adenosyl-L-methionine = a 5-methyl-2'-deoxycytidine in DNA + S-adenosyl-L-homocysteine + H(+). Functionally, a methylase, recognizes the double-stranded sequence 5'-CYCGRG-3', methylates C-1 on both strands, and protects the DNA from cleavage by the AquI endonuclease. This is Type II methyltransferase M.AquIA (aquIMA) from Picosynechococcus sp. (strain ATCC 27264 / PCC 7002 / PR-6) (Agmenellum quadruplicatum).